The sequence spans 288 residues: Hemin import ATP-binding protein HmuV (288 aa).

One can recognise an ABC transporter domain in the interval 31–269 (LRARGLVVER…DLLTRVYQHP (239 aa)). Residue 68 to 75 (GPNGAGKS) coordinates ATP.

The protein belongs to the ABC transporter superfamily. Heme (hemin) importer (TC 3.A.1.14.5) family. As to quaternary structure, the complex is composed of two ATP-binding proteins (HmuV), two transmembrane proteins (HmuU) and a solute-binding protein (HmuT).

The protein localises to the cell membrane. Functionally, part of the ABC transporter complex HmuTUV involved in hemin import. Responsible for energy coupling to the transport system. This Nocardia farcinica (strain IFM 10152) protein is Hemin import ATP-binding protein HmuV.